The sequence spans 211 residues: Large ribosomal subunit protein uL4 (211 aa).

The segment covering 41 to 53 (QAHSRQGTASTLT) has biased composition (polar residues). The interval 41 to 78 (QAHSRQGTASTLTRAEVRGGGRKPYKQKGTGRARQGTI) is disordered. Over residues 60-71 (GGRKPYKQKGTG) the composition is skewed to basic residues.

This sequence belongs to the universal ribosomal protein uL4 family. Part of the 50S ribosomal subunit.

Its function is as follows. One of the primary rRNA binding proteins, this protein initially binds near the 5'-end of the 23S rRNA. It is important during the early stages of 50S assembly. It makes multiple contacts with different domains of the 23S rRNA in the assembled 50S subunit and ribosome. In terms of biological role, forms part of the polypeptide exit tunnel. The chain is Large ribosomal subunit protein uL4 from Prochlorococcus marinus (strain MIT 9313).